A 276-amino-acid polypeptide reads, in one-letter code: Large ribosomal subunit protein uL2 (276 aa).

The tract at residues 221–276 is disordered; sequence RGSAMNPNDHPHGGGEGRAPIGRKSPMTPWGKKARGVKTRDRKKASNALIIRRRKK. A compositionally biased stretch (basic residues) spans 252–276; sequence KKARGVKTRDRKKASNALIIRRRKK.

The protein belongs to the universal ribosomal protein uL2 family. Part of the 50S ribosomal subunit. Forms a bridge to the 30S subunit in the 70S ribosome.

One of the primary rRNA binding proteins. Required for association of the 30S and 50S subunits to form the 70S ribosome, for tRNA binding and peptide bond formation. It has been suggested to have peptidyltransferase activity; this is somewhat controversial. Makes several contacts with the 16S rRNA in the 70S ribosome. The protein is Large ribosomal subunit protein uL2 of Aster yellows witches'-broom phytoplasma (strain AYWB).